Reading from the N-terminus, the 545-residue chain is Chaperonin GroEL 1 (545 aa).

ATP contacts are provided by residues 30–33, K51, 87–91, G415, 479–481, and D495; these read TLGP, DGTTT, and NAA.

The protein belongs to the chaperonin (HSP60) family. As to quaternary structure, forms a cylinder of 14 subunits composed of two heptameric rings stacked back-to-back. Interacts with the co-chaperonin GroES.

The protein localises to the cytoplasm. It catalyses the reaction ATP + H2O + a folded polypeptide = ADP + phosphate + an unfolded polypeptide.. In terms of biological role, together with its co-chaperonin GroES, plays an essential role in assisting protein folding. The GroEL-GroES system forms a nano-cage that allows encapsulation of the non-native substrate proteins and provides a physical environment optimized to promote and accelerate protein folding. In Methylococcus capsulatus (strain ATCC 33009 / NCIMB 11132 / Bath), this protein is Chaperonin GroEL 1.